The chain runs to 410 residues: Ribose 1,5-bisphosphate phosphokinase PhnN (410 aa).

Residues 1–220 (MRYAVYLAPP…VWLLMAGSTS (220 aa)) form a unknown region. The ribose 1,5-bisphosphokinase stretch occupies residues 221-410 (MRTETGQLIY…SHCHQPITAL (190 aa)). 233–240 (GPSGAGKD) contributes to the ATP binding site.

In the C-terminal section; belongs to the ribose 1,5-bisphosphokinase family.

The enzyme catalyses alpha-D-ribose 1,5-bisphosphate + ATP = 5-phospho-alpha-D-ribose 1-diphosphate + ADP. It participates in metabolic intermediate biosynthesis; 5-phospho-alpha-D-ribose 1-diphosphate biosynthesis; 5-phospho-alpha-D-ribose 1-diphosphate from D-ribose 5-phosphate (route II): step 3/3. Catalyzes the phosphorylation of ribose 1,5-bisphosphate to 5-phospho-D-ribosyl alpha-1-diphosphate (PRPP). This chain is Ribose 1,5-bisphosphate phosphokinase PhnN (phnN), found in Laribacter hongkongensis (strain HLHK9).